We begin with the raw amino-acid sequence, 92 residues long: Small ribosomal subunit protein uS19 (92 aa).

This sequence belongs to the universal ribosomal protein uS19 family.

Its function is as follows. Protein S19 forms a complex with S13 that binds strongly to the 16S ribosomal RNA. The polypeptide is Small ribosomal subunit protein uS19 (Bacillus thuringiensis subsp. konkukian (strain 97-27)).